A 241-amino-acid chain; its full sequence is Antimicrobial ginkbilobin-2-like protein (241 aa).

The signal sequence occupies residues 1 to 23 (MLSSKYISVSFLLLSLSLHAVNC). Gnk2-homologous domains follow at residues 25-127 (DPLY…NIDF) and 133-238 (NKNK…LYPF). 4 disulfides stabilise this stretch: C81–C90, C93–C118, C192–C201, and C204–C229. N-linked (GlcNAc...) asparagine glycosylation is present at N89.

The protein belongs to the cysteine-rich repeat secretory protein family.

The protein resides in the secreted. Functionally, possesses antimicrobial activity toward the oomycete Phytophthora cinnamomi (ink disease agent), thus reducing its growth rate and confering an increased resistance to the plant. The protein is Antimicrobial ginkbilobin-2-like protein of Castanea crenata (Japanese chestnut).